The sequence spans 252 residues: Beta-crystallin B1 (252 aa).

Composition is skewed to low complexity over residues 1–15 and 24–37; these read MSQAAKASASATVAV and KGAPPAGTSPSPGT. Residues 1–42 are disordered; that stretch reads MSQAAKASASATVAVNPGPDTKGKGAPPAGTSPSPGTTLAPT. Ser-2 carries the N-acetylserine modification. Residues 2–58 form an N-terminal arm region; the sequence is SQAAKASASATVAVNPGPDTKGKGAPPAGTSPSPGTTLAPTTVPITSAKAAELPPGN. 2 Beta/gamma crystallin 'Greek key' domains span residues 59–98 and 99–143; these read YRLVVFELENFQGRRAEFSGECSNLADRGFDRVRSIIVSA and GPWV…RPIK. Residues 144-148 are connecting peptide; that stretch reads MDAQE. Beta/gamma crystallin 'Greek key' domains are found at residues 149 to 190 and 191 to 233; these read HKIS…KVSS and GTWV…RRLR. Positions 235–252 are C-terminal arm; that stretch reads KQWHLEGSFPVLATEPPK.

It belongs to the beta/gamma-crystallin family. In terms of assembly, homo/heterodimer, or complexes of higher-order. The structure of beta-crystallin oligomers seems to be stabilized through interactions between the N-terminal arms. Post-translationally, specific cleavages in the N-terminal arm occur during lens maturation and give rise to truncated forms, leading to impaired oligomerization and protein insolubilization.

In terms of biological role, crystallins are the dominant structural components of the vertebrate eye lens. This chain is Beta-crystallin B1 (CRYBB1), found in Homo sapiens (Human).